A 1541-amino-acid chain; its full sequence is MAALGTGGYVRNDAVEKLPTIMAGVPARRAQSSPPPAPPLCLRRRTRLTAAPEDAVQNRVSLEKVLGITAQNSSGLTCDPGTGHVAYLAGCVVVILNPKENKQQHILNTARKSLSALAFSPDGKYIVTGENGHRPAVRIWDVEEKNQVAEMLGHKYGVACVAFSPNMKHIVSMGYQHDMVLNVWDWKKDIVVASNKVSCRVIALSFSEDSSYFVTVGNRHVRFWFLEVSTEAKVTGTVPLVGRSGILGELHDNVFCGVACGRGQMAGSTFCVSYSGLLCQFNEKRVLEKWINLKVSLSSCLCVSQELIFCGCTDGIVRIFQAHSLHYLANLPKPHYLGVDVAQGLEPSFLFHRKAEAVYPDTVALTFDPNHQWLSCVYKDHSIYIWDVKDINKVGKMWSELFHSSYVWNVEVYPEFEDQRACLPSGSFLTCSSDNTIRFWNLDSNPDSHWQKNIFSDTLLKVVYVESDIQHLQDMSHFPDRGSENGMAVDMKAGVRVMQVSPDGQHLASGDRSGNLRIHELHFMDELVRVEAHDAEVLCLEYSKPETGLTLLASASRDRLIHVLNVEKNYSLEQTLDDHSSSITAVKFTGSRDIQMISCGADKSIYFRSAQQASDGLHFVRTHHVAEKTTLYDMDIDITQKYVAVACQDRNVRVYNTVNGKQKKCYKGSQGDEGSLLKVHVDPSGTFLATSCSDKSISVIDFYSGECVAKMFGHSEIITGMKFTYDCRHLITVSGDSCVFIWHLGPEITNCMKQHLLEIDQREQPQQNTKDGKWSRDPRQETCTSMPSEISLSPGEQTEDELEEECEPEELLKTPSKESLDSDPRCLLTNGKLPLWAKRLLGDDDVADGSAFHAKRSYQPHGRWAERADQEPLKTILDARDLDCYFTPMKPESLEDSILDTVESQRLAGLLSQSESPQEDGCRHPSLTPPQRESSEVSELLCSLESEVTITGTDSKPCAEEGEGAPGDQQDDFYLRVPSITSKDLNPPEDSGESEADLECSFTAVHSPPRPDPDPPFDVAVPPAPGCPGATEELARPEVPGLSNGSLPQTPEQEKFLRHHFETLTDAPAEELFHGSLRDLKASEAKDDFFNPRLSISAQFLSRFQKPSRFTHTFPTRLPRHPMQSPEVKLTDLAGSQPRAEPLRAGTGYTSPGRTNVLSAGKAEEPLEAWSPLTSCLTGLAPCVSSSSVPPTDKTPPTPTALPTPGLAQGVHTPATSSYVEATAGSRAKMSRSISLEDSKGPVLAELARPPCRPSSLGELSSLGQELRAITTTVTPSSDSEGQEPALPSRGNHEARASLKLTLSSICDRLLLPPPQLEPSAMCVWSQEPVAIQPNVMVTTASFSAPSPVNVSASRLHNSTFLPRFLAPEPLNTSAHPNSPPLPEARPGVPGNITSLLESAPDALSPVHRCPGHCGQPRVPARVPPPGPLELSNVGSIVHRLQTAFQEALDLYHMMVSRDEVSAEQQQAQTELASTFLWIHSQLEANDWLVGTDGAPAQALPSPGPPSPPTLCPLASPDLHALLEHYSELLVQAVRRKAQRD.

At Ala2 the chain carries N-acetylalanine. Ser33 bears the Phosphoserine mark. Thr46 carries the phosphothreonine modification. WD repeat units follow at residues 109–150 (TARK…QVAE), 153–194 (GHKY…VVAS), 196–234 (KVSCRVIALSFSEDSSYFVTVGNRHVRFWFLEVSTEAKV), 291–330 (INLKVSLSSCLCVSQELIFCGCTDGIVRIFQAHSLHYLAN), 357–396 (AVYPDTVALTFDPNHQWLSCVYKDHSIYIWDVKDINKVGK), 402–450 (FHSS…DSHW), 490–529 (DMKAGVRVMQVSPDGQHLASGDRSGNLRIHELHFMDELVR), 532–574 (AHDA…SLEQ), 578–618 (DHSS…DGLH), 626–665 (AEKTTLYDMDIDITQKYVAVACQDRNVRVYNTVNGKQKKC), 671–713 (GDEG…KMFG), and 714–752 (HSEIITGMKFTYDCRHLITVSGDSCVFIWHLGPEITNCM). Ser501 is modified (phosphoserine). 2 disordered regions span residues 762–820 (REQP…KESL) and 911–1050 (LSQS…LPQT). The segment covering 770–780 (KDGKWSRDPRQ) has biased composition (basic and acidic residues). The segment covering 781 to 795 (ETCTSMPSEISLSPG) has biased composition (polar residues). Residues 797 to 809 (QTEDELEEECEPE) show a composition bias toward acidic residues. The WD 13 repeat unit spans residues 803–846 (EEECEPEELLKTPSKESLDSDPRCLLTNGKLPLWAKRLLGDDDV). Positions 810 to 820 (ELLKTPSKESL) are enriched in basic and acidic residues. A compositionally biased stretch (low complexity) spans 937-948 (VSELLCSLESEV). Position 943 is a phosphoserine (Ser943). The segment covering 1008 to 1026 (PPRPDPDPPFDVAVPPAPG) has biased composition (pro residues). At Thr1050 the chain carries Phosphothreonine. A phosphoserine mark is found at Ser1095, Ser1125, and Ser1151. Disordered regions lie at residues 1133–1153 (LAGSQPRAEPLRAGTGYTSPG) and 1185–1212 (SSSSVPPTDKTPPTPTALPTPGLAQGVH). A WD 14 repeat occupies 1138 to 1180 (PRAEPLRAGTGYTSPGRTNVLSAGKAEEPLEAWSPLTSCLTGL). A compositionally biased stretch (pro residues) spans 1193-1202 (DKTPPTPTAL). 3 positions are modified to phosphoserine: Ser1235, Ser1255, and Ser1256. Positions 1273-1293 (TVTPSSDSEGQEPALPSRGNH) are disordered. Position 1275 is a phosphothreonine (Thr1275).

In terms of assembly, can form homodimers (via C-terminus). Interacts (via C-terminus) with MAPKBP1 (via C-terminus). Interacts with CDK5RAP2, CEP152, CEP63 and KIAA0753. CEP63, CDK5RAP2, CEP152, WDR62 are proposed to form a stepwise assembled complex at the centrosome forming a ring near parental centrioles.

It localises to the nucleus. Its subcellular location is the cytoplasm. It is found in the cytoskeleton. The protein resides in the spindle pole. The protein localises to the microtubule organizing center. It localises to the centrosome. Its subcellular location is the centriole. Functionally, required for cerebral cortical development. Plays a role in neuronal proliferation and migration. Plays a role in mother-centriole-dependent centriole duplication; the function seems also to involve CEP152, CDK5RAP2 and CEP63 through a stepwise assembled complex at the centrosome that recruits CDK2 required for centriole duplication. The protein is WD repeat-containing protein 62 (WDR62) of Sus scrofa (Pig).